Consider the following 123-residue polypeptide: Thioredoxin H-type 1 (123 aa).

At Ala2 the chain carries N-acetylalanine. The Thioredoxin domain occupies 2-119; that stretch reads AATAEVIPAG…IEAKLLKHSQ (118 aa). Cysteines 45 and 48 form a disulfide.

The protein belongs to the thioredoxin family. Plant H-type subfamily.

The protein resides in the cytoplasm. Its function is as follows. Participates in various redox reactions through the reversible oxidation of the active center dithiol to a disulfide. The H form is known to activate a number of cytosolic enzymes. This Brassica napus (Rape) protein is Thioredoxin H-type 1 (THL-1).